A 207-amino-acid chain; its full sequence is Small ribosomal subunit protein uS3 (207 aa).

The KH type-2 domain maps to 17-86 (IDEYLEKELR…NPQIEVEEIK (70 aa)).

It belongs to the universal ribosomal protein uS3 family. In terms of assembly, part of the 30S ribosomal subunit.

Its function is as follows. Binds the lower part of the 30S subunit head. The protein is Small ribosomal subunit protein uS3 of Thermococcus sibiricus (strain DSM 12597 / MM 739).